We begin with the raw amino-acid sequence, 201 residues long: Large ribosomal subunit protein uL4 (201 aa).

The segment at R44–A68 is disordered.

It belongs to the universal ribosomal protein uL4 family. Part of the 50S ribosomal subunit.

One of the primary rRNA binding proteins, this protein initially binds near the 5'-end of the 23S rRNA. It is important during the early stages of 50S assembly. It makes multiple contacts with different domains of the 23S rRNA in the assembled 50S subunit and ribosome. In terms of biological role, forms part of the polypeptide exit tunnel. The protein is Large ribosomal subunit protein uL4 of Buchnera aphidicola subsp. Schizaphis graminum (strain Sg).